A 102-amino-acid polypeptide reads, in one-letter code: Small ribosomal subunit protein uS10 (102 aa).

Belongs to the universal ribosomal protein uS10 family. As to quaternary structure, part of the 30S ribosomal subunit.

In terms of biological role, involved in the binding of tRNA to the ribosomes. In Cupriavidus metallidurans (strain ATCC 43123 / DSM 2839 / NBRC 102507 / CH34) (Ralstonia metallidurans), this protein is Small ribosomal subunit protein uS10.